A 1581-amino-acid polypeptide reads, in one-letter code: Ankyrin repeat domain-containing protein 26 (1581 aa).

The tract at residues 1–22 (MKKIFGFRSKGPSPLGPSARPR) is disordered. Ser-13 carries the phosphoserine modification. 5 ANK repeats span residues 46–76 (KDMG…GVND), 80–109 (KDRT…EIDA), 113–142 (ESST…DPNV), 146–175 (SGNT…NIEA), and 179–208 (DDLT…SIHA). Disordered regions lie at residues 225–270 (RLQR…FDNK), 299–343 (LDNG…PVEG), 361–381 (SASQ…WHKS), and 488–652 (VLNK…QTAA). The segment covering 229 to 250 (SENSNPVDNGSEDGSLTRSYNT) has biased composition (polar residues). Residues Ser-239 and Ser-260 each carry the phosphoserine modification. The span at 308–319 (SDSPSESEDAIE) shows a compositional bias: acidic residues. Over residues 327–337 (RVQTLSPSRQS) the composition is skewed to polar residues. Positions 367-381 (PNHDNLTRADGWHKS) are enriched in basic and acidic residues. Polar residues predominate over residues 491-504 (KTETVGMTDAQTFK). Basic and acidic residues-rich tracts occupy residues 505-516 (SEPESVSREEQT), 524-538 (SQQK…KNNE), and 585-601 (KEAK…REPA). Ser-511 carries the post-translational modification Phosphoserine. Coiled coils occupy residues 715–845 (RSHC…NARM), 876–1345 (HEKE…MVEH), 1396–1470 (RSQM…RSLL), and 1521–1550 (LTKM…FCRV).

Interacts with TRIO. Interacts with GPS2. Interacts with CCDC85B. Interacts with HMMR. Widely expressed. Expressed in the arcuate and ventromedial nuclei within the hypothalamus and in the ependyma and the circumventricular organs (at protein level).

Its subcellular location is the cytoplasm. The protein resides in the cytosol. Acts as a regulator of adipogenesis. Involved in the regulation of the feeding behavior. The polypeptide is Ankyrin repeat domain-containing protein 26 (Ankrd26) (Mus musculus (Mouse)).